The sequence spans 347 residues: GTP 3',8-cyclase (347 aa).

The Radical SAM core domain occupies 10–242 (RLNRPIGVLR…ERINARWPLE (233 aa)). R19 serves as a coordination point for GTP. [4Fe-4S] cluster-binding residues include C26 and C30. An S-adenosyl-L-methionine-binding site is contributed by Y32. C33 provides a ligand contact to [4Fe-4S] cluster. Residue R65 participates in GTP binding. G69 lines the S-adenosyl-L-methionine pocket. Residue T104 participates in GTP binding. Residue S129 participates in S-adenosyl-L-methionine binding. A GTP-binding site is contributed by K178. M212 serves as a coordination point for S-adenosyl-L-methionine. [4Fe-4S] cluster-binding residues include C275 and C278. A GTP-binding site is contributed by 280–282 (RLR). C292 provides a ligand contact to [4Fe-4S] cluster.

The protein belongs to the radical SAM superfamily. MoaA family. In terms of assembly, monomer and homodimer. [4Fe-4S] cluster is required as a cofactor.

It carries out the reaction GTP + AH2 + S-adenosyl-L-methionine = (8S)-3',8-cyclo-7,8-dihydroguanosine 5'-triphosphate + 5'-deoxyadenosine + L-methionine + A + H(+). It participates in cofactor biosynthesis; molybdopterin biosynthesis. Catalyzes the cyclization of GTP to (8S)-3',8-cyclo-7,8-dihydroguanosine 5'-triphosphate. The polypeptide is GTP 3',8-cyclase (Synechococcus sp. (strain CC9605)).